We begin with the raw amino-acid sequence, 758 residues long: Phosphoribosylformylglycinamidine synthase subunit PurL (758 aa).

His57 is a catalytic residue. Residues Tyr60 and Arg104 each contribute to the ATP site. Glu106 contacts Mg(2+). Residues Ser107–His110 and Arg129 contribute to the substrate site. The active-site Proton acceptor is the His108. A Mg(2+)-binding site is contributed by Asp130. Gln254 contacts substrate. Asp282 is a Mg(2+) binding site. Glu326 to Gln328 serves as a coordination point for substrate. ATP contacts are provided by Asn509 and Gly546. Asn547 serves as a coordination point for Mg(2+). Ser549 provides a ligand contact to substrate.

It belongs to the FGAMS family. As to quaternary structure, monomer. Part of the FGAM synthase complex composed of 1 PurL, 1 PurQ and 2 PurS subunits.

The protein resides in the cytoplasm. The enzyme catalyses N(2)-formyl-N(1)-(5-phospho-beta-D-ribosyl)glycinamide + L-glutamine + ATP + H2O = 2-formamido-N(1)-(5-O-phospho-beta-D-ribosyl)acetamidine + L-glutamate + ADP + phosphate + H(+). The protein operates within purine metabolism; IMP biosynthesis via de novo pathway; 5-amino-1-(5-phospho-D-ribosyl)imidazole from N(2)-formyl-N(1)-(5-phospho-D-ribosyl)glycinamide: step 1/2. Functionally, part of the phosphoribosylformylglycinamidine synthase complex involved in the purines biosynthetic pathway. Catalyzes the ATP-dependent conversion of formylglycinamide ribonucleotide (FGAR) and glutamine to yield formylglycinamidine ribonucleotide (FGAM) and glutamate. The FGAM synthase complex is composed of three subunits. PurQ produces an ammonia molecule by converting glutamine to glutamate. PurL transfers the ammonia molecule to FGAR to form FGAM in an ATP-dependent manner. PurS interacts with PurQ and PurL and is thought to assist in the transfer of the ammonia molecule from PurQ to PurL. The chain is Phosphoribosylformylglycinamidine synthase subunit PurL from Corynebacterium ammoniagenes (Brevibacterium ammoniagenes).